The sequence spans 376 residues: Glutamate 5-kinase (376 aa).

Residue Lys15 participates in ATP binding. Residues Ser56, Asp143, and Asn155 each coordinate substrate. 175-176 (SD) contacts ATP. Residues 281-358 (KGTLTIDAGA…PDVMSILGVS (78 aa)) enclose the PUA domain.

Belongs to the glutamate 5-kinase family.

The protein resides in the cytoplasm. The catalysed reaction is L-glutamate + ATP = L-glutamyl 5-phosphate + ADP. Its pathway is amino-acid biosynthesis; L-proline biosynthesis; L-glutamate 5-semialdehyde from L-glutamate: step 1/2. Functionally, catalyzes the transfer of a phosphate group to glutamate to form L-glutamate 5-phosphate. This is Glutamate 5-kinase from Rhodopseudomonas palustris (strain HaA2).